The primary structure comprises 245 residues: MGGQKTHFGFSTVNEDEKAGKVAEVFHSVAKNYDIMNDVMSAGLHRVWKHFTINTAHLKKGDKVLDIAGGTGDLSRGWAKRVGKEGEVWLTDINSSMLTVGRDRLLNEGMILPVSLADAEKLPFPDNYFNLVSVAFGLRNMTHKDAALKEMYRVLKPGGTLLVLEFSKIYKPLEGAYDFYSFKLLPVMGRLIAKDAESYQYLAESIRMHPDQETLKQMMLDAGFDSVDYHNMSAGIVALHKGVKF.

Residues T71, D92, and 118 to 119 (DA) each bind S-adenosyl-L-methionine.

Belongs to the class I-like SAM-binding methyltransferase superfamily. MenG/UbiE family.

It catalyses the reaction a 2-demethylmenaquinol + S-adenosyl-L-methionine = a menaquinol + S-adenosyl-L-homocysteine + H(+). It carries out the reaction a 2-methoxy-6-(all-trans-polyprenyl)benzene-1,4-diol + S-adenosyl-L-methionine = a 5-methoxy-2-methyl-3-(all-trans-polyprenyl)benzene-1,4-diol + S-adenosyl-L-homocysteine + H(+). It functions in the pathway quinol/quinone metabolism; menaquinone biosynthesis; menaquinol from 1,4-dihydroxy-2-naphthoate: step 2/2. Its pathway is cofactor biosynthesis; ubiquinone biosynthesis. Methyltransferase required for the conversion of demethylmenaquinol (DMKH2) to menaquinol (MKH2) and the conversion of 2-polyprenyl-6-methoxy-1,4-benzoquinol (DDMQH2) to 2-polyprenyl-3-methyl-6-methoxy-1,4-benzoquinol (DMQH2). The sequence is that of Ubiquinone/menaquinone biosynthesis C-methyltransferase UbiE from Neisseria meningitidis serogroup B (strain ATCC BAA-335 / MC58).